The chain runs to 204 residues: Paraneoplastic antigen-like protein 8C (204 aa).

Positions 135–204 are disordered; sequence PPATGPRELP…RRHHASDKKL (70 aa). Residues 182 to 204 show a composition bias toward basic residues; it reads VGKRGKRKNKKNRRRHHASDKKL.

Belongs to the PNMA family.

The chain is Paraneoplastic antigen-like protein 8C from Homo sapiens (Human).